Consider the following 1591-residue polypeptide: GATOR1 complex protein DEPDC5 (1591 aa).

Disordered stretches follow at residues 427–455 (GKKSASEKTKNGRDTSLGTPKESENTLPI), 478–532 (LATC…STNI), and 695–720 (LSNSSTGVNPRTQNKDSLEDSVSTSP). Residues 430-439 (SASEKTKNGR) show a composition bias toward basic and acidic residues. Residues 494–508 (SASSCDVSSSPSLPS) are compositionally biased toward low complexity. Ser-505 bears the Phosphoserine mark. Residues 518 to 532 (SQASDDSSLGKSTNI) show a composition bias toward polar residues. Position 992 is a phosphoserine (Ser-992). Disordered regions lie at residues 1040-1064 (SQKSLGEQQTTVHGKSSTQPAENSS) and 1118-1153 (STGQPMDRGNNQTFGNSQNIEQAFPSANSGDYSSQQ). Polar residues predominate over residues 1118-1149 (STGQPMDRGNNQTFGNSQNIEQAFPSANSGDY). In terms of domain architecture, DEP spans 1175 to 1250 (PSTGVQLLSE…YGFYFYKIVM (76 aa)). Phosphoserine is present on Ser-1518.

Belongs to the IML1 family. In terms of assembly, within the GATOR complex, component of the GATOR1 subcomplex, made of DEPDC5, NPRL2 and NPRL3. GATOR1 mediates the strong interaction of the GATOR complex with small GTPases Rag (RagA/RRAGA, RagB/RRAGB, RagC/RRAGC and/or RagD/RRAGD) heterodimers. GATOR1 interacts with GPR155/LYCHOS; interaction takes place in presence of cholesterol and prevents interaction between GATOR1 and KICSTOR. Interacts with SAMTOR; interaction is direct and takes place in presence of methionine, leading to inhibit the activity of the GATOR1 complex. Phosphorylation at Ser-992 and Ser-1518 by AKT1 and PIM1 inhibit the activity of DEPDC5, releasing inhibition of the mTORC1 pathway. Post-translationally, ubiquitinated. Amino acid-induced 'Lys-48'-linked polyubiquitination of DEPDC5 by the BCR(KLHL22) ubiquitin ligase complex leads to DEPDC5 proteasomal degradation and inhibition of the GATOR1 complex. Ubiquitination may occur at multiple lysines. In terms of tissue distribution, expressed at low levels in all brain regions. Expressed throughout brain development, including in midgestation embryonic head (11.5 dpc), neonatal brain and whole adult brain. Present in neurons and absent in non-neuronal cells, including astrocytes (at protein level).

The protein localises to the lysosome membrane. It localises to the cytoplasm. The protein resides in the cytosol. Its subcellular location is the perinuclear region. Functionally, as a component of the GATOR1 complex functions as an inhibitor of the amino acid-sensing branch of the mTORC1 pathway. In response to amino acid depletion, the GATOR1 complex has GTPase activating protein (GAP) activity and strongly increases GTP hydrolysis by RagA/RRAGA (or RagB/RRAGB) within heterodimeric Rag complexes, thereby turning them into their inactive GDP-bound form, releasing mTORC1 from lysosomal surface and inhibiting mTORC1 signaling. In the presence of abundant amino acids, the GATOR1 complex is negatively regulated by GATOR2, the other GATOR subcomplex, in this amino acid-sensing branch of the TORC1 pathway. Within the GATOR1 complex, DEPDC5 mediates direct interaction with the nucleotide-binding pocket of small GTPases Rag (RagA/RRAGA, RagB/RRAGB, RagC/RRAGC and/or RagD/RRAGD) and coordinates their nucleotide loading states by promoting RagA/RRAGA or RagB/RRAGB into their GDP-binding state and RagC/RRAGC or RagD/RRAGD into their GTP-binding state. However, it does not execute the GAP activity, which is mediated by NPRL2. This is GATOR1 complex protein DEPDC5 from Mus musculus (Mouse).